The following is a 602-amino-acid chain: MASAHIEHKLSLLPDLPGSYQMKDINGKIIYVGKAKNLKNRVRSYFKSSHDGKVAAMVSQVADFDFIVTSTDKEAFLLEITLIQKYQPYYNIKLKKGTGYPYIKITHERDPKIEITGTIRKDGGYYFGPYPNVYAAQETMHFIQKVYPLRRCNGYQGRPCLYYHMGQCLGACFRTVPEKEYTDQIERIKRFLNGNVGKAKASLTAKMERAAKNLQFERAAEIRDQLHYIEQTLEKQKIISHDNTTRDLFNFYMDKGWISIQVFFIRQARLMKRESRLFPVVNTAKEEFESFILQFYSRRNNVKPREVLVPAGLDNKVLADILEIPVRTPQRGEKRDLMALAAKNSQIKLEDKFRLMELDNRTTIGAMKELMAALNLPMGHVAEAFDHSHIQGADPVSAMVQFVDGQPAKNNYRKYKLDADKTHNGADEAANTREVIRRRYTRLLKERAPLPDLILMDGGEIEMNAAKDVLENELNLDIPVAGMVKNNKHKTAALLFGNADQLINLDPKSQGFYLLERIQDEVHRFAITFHRQLHAKNSLASRLEGIKGVGPKTRLKLLRKFKTINKIKEAPLEDIQELGISKKVAQALKLSLTAEPTPARRV.

The GIY-YIG domain maps to 15–92; that stretch reads DLPGSYQMKD…IQKYQPYYNI (78 aa). Positions 197 to 232 constitute a UVR domain; it reads GKAKASLTAKMERAAKNLQFERAAEIRDQLHYIEQT.

It belongs to the UvrC family. In terms of assembly, interacts with UvrB in an incision complex.

The protein resides in the cytoplasm. Its function is as follows. The UvrABC repair system catalyzes the recognition and processing of DNA lesions. UvrC both incises the 5' and 3' sides of the lesion. The N-terminal half is responsible for the 3' incision and the C-terminal half is responsible for the 5' incision. The sequence is that of UvrABC system protein C from Lacticaseibacillus paracasei (strain ATCC 334 / BCRC 17002 / CCUG 31169 / CIP 107868 / KCTC 3260 / NRRL B-441) (Lactobacillus paracasei).